The sequence spans 144 residues: Nucleoside diphosphate kinase (144 aa).

Residues Lys-5, Phe-53, Arg-81, Thr-87, Arg-98, and Asn-108 each contribute to the ATP site. His-111 serves as the catalytic Pros-phosphohistidine intermediate.

This sequence belongs to the NDK family. The cofactor is Mg(2+).

The catalysed reaction is a 2'-deoxyribonucleoside 5'-diphosphate + ATP = a 2'-deoxyribonucleoside 5'-triphosphate + ADP. It carries out the reaction a ribonucleoside 5'-diphosphate + ATP = a ribonucleoside 5'-triphosphate + ADP. In terms of biological role, major role in the synthesis of nucleoside triphosphates other than ATP. The ATP gamma phosphate is transferred to the NDP beta phosphate via a ping-pong mechanism, using a phosphorylated active-site intermediate. The sequence is that of Nucleoside diphosphate kinase from Solanum lycopersicum (Tomato).